The following is a 221-amino-acid chain: Queuosine precursor transporter (221 aa).

Residues Met-1–Ala-12 lie on the Cytoplasmic side of the membrane. Residues Leu-13–Leu-33 traverse the membrane as a helical segment. Pro-34 is a topological domain (periplasmic). The helical transmembrane segment at Val-35–Ala-55 threads the bilayer. At Thr-56–Arg-70 the chain is on the cytoplasmic side. Residues Ile-71–Tyr-91 form a helical membrane-spanning segment. At Met-92–Gly-97 the chain is on the periplasmic side. A helical transmembrane segment spans residues Phe-98–Ala-118. Residues Tyr-119–Pro-143 lie on the Cytoplasmic side of the membrane. A helical membrane pass occupies residues Thr-144 to Trp-164. Residues Arg-165–Cys-184 lie on the Periplasmic side of the membrane. Residues Phe-185–Leu-205 form a helical membrane-spanning segment. Topologically, residues Leu-206–Ser-221 are cytoplasmic.

This sequence belongs to the vitamin uptake transporter (VUT/ECF) (TC 2.A.88) family. Q precursor transporter subfamily.

Its subcellular location is the cell inner membrane. Involved in the import of queuosine (Q) precursors, required for Q precursor salvage. Transports 7-cyano-7-deazaguanine (preQ(0)) and 7-aminomethyl-7-deazaguanine (preQ(1)), with a preference for preQ(0). The protein is Queuosine precursor transporter (yhhQ) of Escherichia coli (strain K12).